A 387-amino-acid polypeptide reads, in one-letter code: EARP-interacting protein homolog (387 aa).

4 WD repeats span residues 132–172, 182–222, 226–266, and 270–310; these read TAHG…TKSV, KGQL…QIYC, AHGQ…EPVK, and EHSH…SEPF. The interval 311-339 is disordered; the sequence is GHLVDDEDLSDQEDNPQEEKTKEPLQDSI. Over residues 315–326 the composition is skewed to acidic residues; that stretch reads DDEDLSDQEDNP. The stretch at 345–385 is one WD 5 repeat; sequence EHEDSVYAVEWSSADPWLFASLSYDGRLVINRVPRALKYNI.

The protein belongs to the WD repeat EIPR1 family.

The protein localises to the golgi apparatus. The protein resides in the trans-Golgi network. May act as a component of endosomal retrieval machinery that is involved in protein transport from early endosomes to either recycling endosomes or the trans-Golgi network. This is EARP-interacting protein homolog from Xenopus laevis (African clawed frog).